Consider the following 1915-residue polypeptide: Protein TIC 214 (1915 aa).

The next 6 helical transmembrane spans lie at 18 to 38 (IINS…FSIG), 64 to 84 (FITG…HLAL), 90 to 110 (ITVL…HKYF), 126 to 146 (LNIQ…HFIL), 174 to 194 (VGWL…LIWI), and 230 to 250 (IFSI…PSTL). Disordered regions lie at residues 260 to 319 (KMKQ…EIRV) and 1566 to 1631 (NKNI…GSVL). Residues 267-277 (SEEETDVEIET) are compositionally biased toward acidic residues. Basic and acidic residues predominate over residues 279–288 (SETKETKEEQ). The span at 304–315 (EKEDPDKIDETE) shows a compositional bias: acidic residues. The span at 1587–1601 (KSLELENRNQEEKES) shows a compositional bias: basic and acidic residues. A compositionally biased stretch (polar residues) spans 1602 to 1631 (SSQGDLGSNAQNQGNLGPNAQNQGNLGSVL).

The protein belongs to the TIC214 family. Part of the Tic complex.

Its subcellular location is the plastid. It localises to the chloroplast inner membrane. In terms of biological role, involved in protein precursor import into chloroplasts. May be part of an intermediate translocation complex acting as a protein-conducting channel at the inner envelope. This chain is Protein TIC 214, found in Platanus occidentalis (Sycamore).